Here is a 190-residue protein sequence, read N- to C-terminus: C-type lectin domain family 5 member A (190 aa).

Residues 1–4 lie on the Cytoplasmic side of the membrane; it reads MNWH. A helical; Signal-anchor for type II membrane protein membrane pass occupies residues 5-25; that stretch reads MIISGLIVVVIKVVGMTFFLL. Over 26–190 the chain is Extracellular; the sequence is YFPQVFGKSN…YRWICEMNAK (165 aa). 3 N-linked (GlcNAc...) asparagine glycosylation sites follow: Asn-51, Asn-146, and Asn-153. Residues 80–186 form the C-type lectin domain; sequence HQGKCFFFSF…CEVSYRWICE (107 aa). Disulfide bonds link Cys-101/Cys-185 and Cys-163/Cys-177.

In terms of assembly, monomer. Homodimer. The majority of CLEC5A is expressed as a monomeric form on macrophages. Interacts with TYROBP/DAP12. The interaction with TYROBP is required for CLEC5 cell surface expression. Interacts with HCST/DAP10. Forms a CLEC5A/TYROBP/HCST trimolecular complex depending almost solely on TYROBP. N-glycosylated. Contains sialic acid residues. As to expression, strong expression in bone marrow cells and thioglycollate-induced neutrophils (at protein level). Expressed on granulocytes and monocytes from bone marrow and peripheral blood. Expressed in macrophage cell line J-774, but not in T-cell lines, B-cell lines, or mast cell lines.

The protein resides in the cell membrane. In terms of biological role, functions as a positive regulator of osteoclastogenesis. Cell surface receptor that signals via TYROBP. Regulates inflammatory responses. The chain is C-type lectin domain family 5 member A (Clec5a) from Mus musculus (Mouse).